We begin with the raw amino-acid sequence, 330 residues long: Alpha/beta hydrolase domain-containing protein VTE7 (330 aa).

The AB hydrolase-1 domain occupies Val84–Lys315. Ser157 (nucleophile) is an active-site residue. Residues Asp279 and His307 each act as charge relay system in the active site.

This sequence belongs to the AB hydrolase superfamily.

It localises to the plastid. It is found in the chloroplast envelope. In terms of biological role, hydrolase involved in tocopherol (vitamin E) biosynthesis. Releases prenyl alcohols from chlorophyll biosynthetic intermediates, which are then converted to the corresponding diphosphates for tocopherol biosynthesis. Provides most of the phytol from chlorophyll for tocopherol biosynthesis in seeds. This chain is Alpha/beta hydrolase domain-containing protein VTE7, found in Arabidopsis thaliana (Mouse-ear cress).